Reading from the N-terminus, the 469-residue chain is Zinc finger CCCH domain-containing protein 30 (469 aa).

A C3H1-type zinc finger spans residues 415–443 (VRPMKPCAYFNSPKGCRNGASCTFLHDAS). The tract at residues 444-469 (APTRKDHQKQKGSKRIKLDNTMGGRN) is disordered. The segment covering 449–458 (DHQKQKGSKR) has biased composition (basic residues).

The sequence is that of Zinc finger CCCH domain-containing protein 30 from Oryza sativa subsp. japonica (Rice).